A 92-amino-acid chain; its full sequence is Small ribosomal subunit protein bS20 (92 aa).

Positions 1 to 23 (MANTPSAKKRAKQAEKRRSHNAS) are disordered. Residues 7–20 (AKKRAKQAEKRRSH) are compositionally biased toward basic residues.

This sequence belongs to the bacterial ribosomal protein bS20 family.

Functionally, binds directly to 16S ribosomal RNA. In Pseudomonas savastanoi pv. phaseolicola (strain 1448A / Race 6) (Pseudomonas syringae pv. phaseolicola (strain 1448A / Race 6)), this protein is Small ribosomal subunit protein bS20.